The chain runs to 304 residues: Glutaminase (304 aa).

Substrate is bound by residues serine 63, asparagine 114, glutamate 158, asparagine 165, tyrosine 189, tyrosine 240, and valine 258.

Belongs to the glutaminase family. As to quaternary structure, homotetramer.

It carries out the reaction L-glutamine + H2O = L-glutamate + NH4(+). This chain is Glutaminase, found in Shewanella baltica (strain OS195).